Here is a 131-residue protein sequence, read N- to C-terminus: uncharacterized protein (131 aa).

A CCHC-type; degenerate zinc finger spans residues 64 to 81 (VNCDKCGKPGNVKNDCPG).

This is an uncharacterized protein from Homo sapiens (Human).